Consider the following 108-residue polypeptide: Competence protein ComGC (108 aa).

A signal peptide spans 1-13; that stretch reads MKKMMTFLKKAKV. Residues 14-39 form a may be involved in polymerization of ComGC region; it reads KAFTLVEMLVVLLIISVLFLLFVPNL. An N-methylphenylalanine modification is found at Phe-16. Residues 16–36 traverse the membrane as a helical segment; that stretch reads FTLVEMLVVLLIISVLFLLFV.

This sequence belongs to the ComGC family. In terms of assembly, the transformation pili are flexible filaments, consisting mainly of the major pilin ComGC and smaller amounts of the minor pilins, including at least ComGD, ComGF and ComGG, and perhaps ComGE. Homodimer. Forms higher-order multimers. Interacts with ComGG; the interaction is probably direct. In terms of processing, undergoes proteolytic cleavage.

The protein localises to the cell membrane. It localises to the cell surface. The protein resides in the fimbrium. It is found in the secreted. In terms of biological role, major component of the type IV-like pilus (T4P) that plays a role in transformation. Transformation pili are dynamically extended and retracted, perhaps thereby promoting DNA uptake and transformation. Required for transformation. Required for DNA binding. The polypeptide is Competence protein ComGC (Streptococcus pneumoniae (strain ATCC BAA-255 / R6)).